The sequence spans 165 residues: Nicotine 6-hydroxylase small subunit (165 aa).

The region spanning 10–86 (VEIDVEVNGR…GRSIRTVEDL (77 aa)) is the 2Fe-2S ferredoxin-type domain. [2Fe-2S] cluster is bound by residues Cys48, Cys53, Cys56, and Cys68.

In terms of assembly, heterotrimer composed of a large subunit (NdhL), a medium subunit (NdhM) and a small subunit (NdhS). [2Fe-2S] cluster is required as a cofactor.

It is found in the cytoplasm. The enzyme catalyses (R)-nicotine + A + H2O = (R)-6-hydroxynicotine + AH2. The catalysed reaction is (S)-nicotine + A + H2O = (S)-6-hydroxynicotine + AH2. It participates in alkaloid degradation; nicotine degradation; 6-hydroxypseudooxynicotine from nicotine (R-isomer route): step 1/2. Its pathway is alkaloid degradation; nicotine degradation; 6-hydroxypseudooxynicotine from nicotine (S-isomer route): step 1/2. Its activity is regulated as follows. Nicotine dehydrogenase activity is inhibited by tungsten. Its function is as follows. Component of the nicotine 6-hydroxylase, which is involved in the degradation of nicotine. Catalyzes the hydroxylation of the pyridine ring at C6 to form 6-hydroxynicotine. Can use both L-nicotine and D-nicotine. The chain is Nicotine 6-hydroxylase small subunit from Paenarthrobacter nicotinovorans (Arthrobacter nicotinovorans).